A 500-amino-acid polypeptide reads, in one-letter code: Toluene-4-monooxygenase system, hydroxylase component subunit alpha (500 aa).

Fe cation is bound by residues Glu104, Glu134, His137, Glu197, Glu231, and His234.

This sequence belongs to the TmoA/XamoA family. The alkene monooxygenase multicomponent enzyme system is composed of an electron transfer component and a monooxygenase component interacting with the effector protein TmoD. The electron transfer component is composed of a ferredoxin reductase (TmoF) and a ferredoxin (TmoC), and the monooxygenase component is formed by a heterohexamer (dimer of heterotrimers) of two alpha subunits (TmoA), two beta subunits (TmoE) and two gamma subunits (TmoB). Fe(2+) serves as cofactor.

The enzyme catalyses toluene + NADH + O2 + H(+) = 4-methylphenol + NAD(+) + H2O. It functions in the pathway xenobiotic degradation; toluene degradation. With respect to regulation, inhibited by Zn(2+) and Cu(2+). Functionally, component of the toluene-4-monooxygenase multicomponent enzyme system which catalyzes the O2- and NADH-dependent hydroxylation of toluene to form p-cresol. Also able to convert benzene to phenol, catechol, and 1,2,3-trihydroxybenzene by successive hydroxylations. The protein is Toluene-4-monooxygenase system, hydroxylase component subunit alpha of Ectopseudomonas mendocina (Pseudomonas mendocina).